The primary structure comprises 524 residues: Beta-glucosidase 22 (524 aa).

Residues 1 to 24 (MALQKFPLLGLLFLITIVVSSTIA) form the signal peptide. Residue Q55 coordinates a beta-D-glucoside. An N-linked (GlcNAc...) asparagine glycan is attached at N61. Residues H158 and 203–204 (NE) each bind a beta-D-glucoside. E204 (proton donor) is an active-site residue. C223 and C230 are disulfide-bonded. A beta-D-glucoside is bound by residues Y346, E418, W468, 475–476 (EW), and F484. The active-site Nucleophile is E418. N494 carries an N-linked (GlcNAc...) asparagine glycan. The short motif at 521-524 (KDEL) is the Prevents secretion from ER element.

Belongs to the glycosyl hydrolase 1 family. In terms of assembly, component of the PYK10 complex, at least composed of PYK10/BGLU23, BGLU21, BGLU22, JAL22, JAL23, PBP1/JAL30, PBP2/JAL31, JAL32, JAL33, JAL34, JAL35, GLL22 and GLL23. As to expression, expressed exclusively in roots.

It localises to the endoplasmic reticulum lumen. It carries out the reaction Hydrolysis of terminal, non-reducing beta-D-glucosyl residues with release of beta-D-glucose.. Its activity is regulated as follows. Activated upon binding to PBP1 or PBP2. Functionally, beta-D-glucosidase active on scopolin &gt;&gt; esculin &gt;&gt; 4-MU-glucoside. No activity with DIMBOA-glucoside, pNP-glucoside, oNP-glucoside and sinigrin as substrates. This chain is Beta-glucosidase 22, found in Arabidopsis thaliana (Mouse-ear cress).